Here is a 732-residue protein sequence, read N- to C-terminus: Catalase-peroxidase (732 aa).

A disordered region spans residues 1–26; sequence MDAKTDDQGGKCPFPHGGGSRGHRNR. A cross-link (tryptophyl-tyrosyl-methioninium (Trp-Tyr) (with M-245)) is located at residues 97 to 219; sequence WHSAGTYRTT…LGAVQMGLIY (123 aa). Residue histidine 98 is the Proton acceptor of the active site. Positions 219-245 form a cross-link, tryptophyl-tyrosyl-methioninium (Tyr-Met) (with W-97); it reads YVNPEGPNGNPDPVAAAKDIRETFARM. Histidine 260 provides a ligand contact to heme b.

Belongs to the peroxidase family. Peroxidase/catalase subfamily. As to quaternary structure, homodimer or homotetramer. Heme b serves as cofactor. In terms of processing, formation of the three residue Trp-Tyr-Met cross-link is important for the catalase, but not the peroxidase activity of the enzyme.

The enzyme catalyses H2O2 + AH2 = A + 2 H2O. It carries out the reaction 2 H2O2 = O2 + 2 H2O. Functionally, bifunctional enzyme with both catalase and broad-spectrum peroxidase activity. This chain is Catalase-peroxidase, found in Rhodopseudomonas palustris (strain BisB5).